The following is a 166-amino-acid chain: Small ribosomal subunit protein uS5 (166 aa).

One can recognise an S5 DRBM domain in the interval 12–75 (YIEKLVQVNR…EAARRNMIQV (64 aa)).

The protein belongs to the universal ribosomal protein uS5 family. Part of the 30S ribosomal subunit. Contacts proteins S4 and S8.

Functionally, with S4 and S12 plays an important role in translational accuracy. In terms of biological role, located at the back of the 30S subunit body where it stabilizes the conformation of the head with respect to the body. This Pseudomonas aeruginosa (strain LESB58) protein is Small ribosomal subunit protein uS5.